The sequence spans 585 residues: Protein NRT1/ PTR FAMILY 4.6 (585 aa).

Helical transmembrane passes span 28–48 (GMLA…AYLA), 75–95 (FMGT…AFFS), 96–116 (TFQI…ILTI), 142–162 (AMLF…KGSL), 184–204 (FFNY…TFVV), 211–231 (GWEW…LIFL), 343–363 (IVLK…CLAQ), 391–411 (IFPV…IIPF), 428–448 (IGVG…VEIK), 465–485 (LPVT…ADLF), 508–528 (SLSW…VSIV), and 554–574 (FYWL…FWAM).

It belongs to the major facilitator superfamily. Proton-dependent oligopeptide transporter (POT/PTR) (TC 2.A.17) family. In terms of tissue distribution, expressed in root hairs and in epidermis of both root tips and mature regions of roots. Detected in shoots, stems, flowers, siliques and imbibed seeds. Expressed in vascular tissues in cotyledons, trus leaves, hypocotyls, roots and inflorescence stems.

It localises to the cell membrane. Low-affinity proton-dependent nitrate transporter. Involved in constitutive nitrate uptake. Not involved in histidine or dipeptides transport. Involved in (+)-abscisic acid (ABA) transport, but not in gibberellin, indole-3-acetic acid or jasmonic acid import. Mediates cellular ABA uptake. Nitrate does not compete with abscisic acid as a substrate of NPF4.6. In Arabidopsis thaliana (Mouse-ear cress), this protein is Protein NRT1/ PTR FAMILY 4.6 (NPF4.6).